Consider the following 109-residue polypeptide: Nucleoid-associated protein YbaB (109 aa).

It belongs to the YbaB/EbfC family. As to quaternary structure, homodimer.

The protein resides in the cytoplasm. The protein localises to the nucleoid. Functionally, binds to DNA and alters its conformation. May be involved in regulation of gene expression, nucleoid organization and DNA protection. This is Nucleoid-associated protein YbaB from Escherichia coli O8 (strain IAI1).